The following is a 211-amino-acid chain: SsrA-binding protein (211 aa).

2 disordered regions span residues 1 to 20 and 170 to 211; these read MHRR…PERS and RLRR…RHEN. The segment covering 177–187 has biased composition (polar residues); sequence QRNTQRSVTPR.

This sequence belongs to the SmpB family.

The protein resides in the cytoplasm. In terms of biological role, required for rescue of stalled ribosomes mediated by trans-translation. Binds to transfer-messenger RNA (tmRNA), required for stable association of tmRNA with ribosomes. tmRNA and SmpB together mimic tRNA shape, replacing the anticodon stem-loop with SmpB. tmRNA is encoded by the ssrA gene; the 2 termini fold to resemble tRNA(Ala) and it encodes a 'tag peptide', a short internal open reading frame. During trans-translation Ala-aminoacylated tmRNA acts like a tRNA, entering the A-site of stalled ribosomes, displacing the stalled mRNA. The ribosome then switches to translate the ORF on the tmRNA; the nascent peptide is terminated with the 'tag peptide' encoded by the tmRNA and targeted for degradation. The ribosome is freed to recommence translation, which seems to be the essential function of trans-translation. This chain is SsrA-binding protein, found in Tropheryma whipplei (strain TW08/27) (Whipple's bacillus).